A 412-amino-acid polypeptide reads, in one-letter code: Membrane fusion protein MtrC (412 aa).

An N-terminal signal peptide occupies residues 1–24 (MAFYASKAMRAAALAAAVALALSS). The N-palmitoyl cysteine moiety is linked to residue Cys25. Cys25 carries the S-diacylglycerol cysteine lipid modification. Positions 377-412 (AKKVTPKEWAPSENQAAAPQAGVQTASEAKPASEAK) are disordered. A compositionally biased stretch (polar residues) spans 388 to 403 (SENQAAAPQAGVQTAS).

It belongs to the membrane fusion protein (MFP) (TC 8.A.1) family.

Its subcellular location is the cell inner membrane. In terms of biological role, cell membrane lipoprotein, involved in cell membrane permeability to hydrophobic compounds such as antibiotics, dyes and detergents. This is Membrane fusion protein MtrC (mtrC) from Neisseria gonorrhoeae.